The primary structure comprises 340 residues: Glyceraldehyde-3-phosphate dehydrogenase (340 aa).

NAD(+) contacts are provided by residues 13–14 (TI) and glycine 112. Residue 141–143 (SCN) coordinates D-glyceraldehyde 3-phosphate. Residue cysteine 142 is the Nucleophile of the active site. Arginine 170 contributes to the NAD(+) binding site. 196–197 (HG) is a D-glyceraldehyde 3-phosphate binding site. Residue glutamine 302 coordinates NAD(+).

It belongs to the glyceraldehyde-3-phosphate dehydrogenase family. As to quaternary structure, homotetramer.

Its subcellular location is the cytoplasm. The enzyme catalyses D-glyceraldehyde 3-phosphate + phosphate + NADP(+) = (2R)-3-phospho-glyceroyl phosphate + NADPH + H(+). It catalyses the reaction D-glyceraldehyde 3-phosphate + phosphate + NAD(+) = (2R)-3-phospho-glyceroyl phosphate + NADH + H(+). It participates in carbohydrate degradation; glycolysis; pyruvate from D-glyceraldehyde 3-phosphate: step 1/5. This chain is Glyceraldehyde-3-phosphate dehydrogenase (gap), found in Archaeoglobus fulgidus (strain ATCC 49558 / DSM 4304 / JCM 9628 / NBRC 100126 / VC-16).